Consider the following 1195-residue polypeptide: Probable beta-tubulin polyglutamylase (1195 aa).

Positions Met1–Glu110 are disordered. 2 stretches are compositionally biased toward acidic residues: residues Asp17 to Gln27 and Gln44 to Asn79. Coiled coils occupy residues Asp59–Glu103 and Gln144–Gln260. The span at Gln80–Asn89 shows a compositional bias: low complexity. Residues Leu90–Glu110 are compositionally biased toward polar residues. Residues Pro281–Gln343 are disordered. Over residues Asp294–Glu316 the composition is skewed to acidic residues. The segment covering Arg322–Asn334 has biased composition (basic residues). One can recognise a TTL domain in the interval Lys350–Asn703. ATP contacts are provided by residues Gln500 to Leu503, Lys513, and Asp515. The c-MTBD region stretch occupies residues Pro674 to Asp756. The tract at residues Arg783–Gln862 is disordered. Polar residues predominate over residues Pro825 to Asn849. Acidic residues predominate over residues Glu850–Gln860.

It localises to the cytoplasm. It is found in the cytoskeleton. The protein resides in the cell projection. The protein localises to the cilium. Its subcellular location is the cilium basal body. Functionally, probable tubulin polyglutamylase with a strong preference for beta-tubulin. The sequence is that of Probable beta-tubulin polyglutamylase (Ttll6a) from Tetrahymena thermophila (strain SB210).